The chain runs to 502 residues: Probable cytochrome P450 6a23 (502 aa).

Residue Cys-445 coordinates heme.

The protein belongs to the cytochrome P450 family. It depends on heme as a cofactor.

It localises to the endoplasmic reticulum membrane. Its subcellular location is the microsome membrane. Functionally, may be involved in the metabolism of insect hormones and in the breakdown of synthetic insecticides. This chain is Probable cytochrome P450 6a23 (Cyp6a23), found in Drosophila melanogaster (Fruit fly).